The sequence spans 476 residues: Nyctalopin (476 aa).

A signal peptide spans 1-18 (MLVLLLHAVVLGLPSAWA). LRR repeat units follow at residues 60-84 (VSID…PSLR), 85-108 (RLSL…PRLA), 110-133 (LRLA…SRLR), 134-157 (RLDL…PALR), 159-181 (LAAF…NLTH), 182-204 (AHLE…RRLR), 205-228 (SLSL…GVLE), 229-252 (HLLL…RRLR), 254-276 (LNLG…AELE), 277-300 (LLYL…SGLL), and 302-324 (LHLN…FFLG). Asn-92 is a glycosylation site (N-linked (GlcNAc...) asparagine). N-linked (GlcNAc...) asparagine glycosylation is present at Asn-178. An N-linked (GlcNAc...) asparagine glycan is attached at Asn-295. Residues 336–387 (DCRLEWLRDWMEGSGRVTDVPCASPGSVAGLDLSQVTFGRSSDGLCVDPEEL) enclose the LRRCT domain. 3 N-linked (GlcNAc...) asparagine glycosylation sites follow: Asn-388, Asn-427, and Asn-434.

The protein belongs to the small leucine-rich proteoglycan (SLRP) family. SLRP class IV subfamily. In terms of tissue distribution, expressed in kidney and retina. Also at low levels in brain, testis and muscle. Within the retina, expressed in the inner segment of photoreceptors, outer and inner nuclear layers and the ganglion cell layer.

It localises to the secreted. The protein resides in the extracellular space. It is found in the extracellular matrix. The protein is Nyctalopin (NYX) of Homo sapiens (Human).